Here is a 737-residue protein sequence, read N- to C-terminus: Polyribonucleotide nucleotidyltransferase (737 aa).

The Mg(2+) site is built by Asp-489 and Asp-495. The region spanning Pro-556–Ile-615 is the KH domain. An S1 motif domain is found at Asp-625–Lys-693. The disordered stretch occupies residues Ser-691–Glu-737. Residues Pro-700–Pro-714 are compositionally biased toward basic and acidic residues. The segment covering His-715 to Lys-724 has biased composition (basic residues). Residues Pro-725–Glu-737 are compositionally biased toward basic and acidic residues.

The protein belongs to the polyribonucleotide nucleotidyltransferase family. Mg(2+) is required as a cofactor.

It localises to the cytoplasm. It carries out the reaction RNA(n+1) + phosphate = RNA(n) + a ribonucleoside 5'-diphosphate. In terms of biological role, involved in mRNA degradation. Catalyzes the phosphorolysis of single-stranded polyribonucleotides processively in the 3'- to 5'-direction. This chain is Polyribonucleotide nucleotidyltransferase, found in Streptococcus pneumoniae serotype 19F (strain G54).